A 205-amino-acid polypeptide reads, in one-letter code: N-(5'-phosphoribosyl)anthranilate isomerase (205 aa).

The protein belongs to the TrpF family.

It catalyses the reaction N-(5-phospho-beta-D-ribosyl)anthranilate = 1-(2-carboxyphenylamino)-1-deoxy-D-ribulose 5-phosphate. Its pathway is amino-acid biosynthesis; L-tryptophan biosynthesis; L-tryptophan from chorismate: step 3/5. The chain is N-(5'-phosphoribosyl)anthranilate isomerase from Phocaeicola vulgatus (strain ATCC 8482 / DSM 1447 / JCM 5826 / CCUG 4940 / NBRC 14291 / NCTC 11154) (Bacteroides vulgatus).